We begin with the raw amino-acid sequence, 156 residues long: Small ribosomal subunit protein uS7 (156 aa).

It belongs to the universal ribosomal protein uS7 family. Part of the 30S ribosomal subunit. Contacts proteins S9 and S11.

Functionally, one of the primary rRNA binding proteins, it binds directly to 16S rRNA where it nucleates assembly of the head domain of the 30S subunit. Is located at the subunit interface close to the decoding center, probably blocks exit of the E-site tRNA. This Streptomyces griseus subsp. griseus (strain JCM 4626 / CBS 651.72 / NBRC 13350 / KCC S-0626 / ISP 5235) protein is Small ribosomal subunit protein uS7.